The chain runs to 586 residues: uncharacterized protein (586 aa).

The ABC transmembrane type-1 domain maps to Y29–S312. Transmembrane regions (helical) follow at residues G30–M50, V66–V86, M162–V184, and I256–V276. Residues I346–L580 form the ABC transporter domain. Position 379–386 (G379–S386) interacts with ATP.

This sequence belongs to the ABC transporter superfamily.

Its subcellular location is the cell membrane. This is an uncharacterized protein from Sinorhizobium fredii (strain NBRC 101917 / NGR234).